The sequence spans 493 residues: Beta-hexosaminidase Amuc_2018 (493 aa).

The signal sequence occupies residues 1–21 (MARPLPILGGILLSFSPPAEA). Residue Arg-122 coordinates substrate. Active-site charge relay system residues include Asp-151 and His-214. 2 residues coordinate Zn(2+): Cys-227 and Cys-247. Asp-278 is a binding site for substrate. Glu-279 (charge relay system) is an active-site residue. Residues Cys-288 and Cys-291 each contribute to the Zn(2+) site. Residues Trp-345, 373 to 375 (YLD), and 421 to 423 (WAE) contribute to the substrate site.

This sequence belongs to the glycosyl hydrolase 20 family.

The enzyme catalyses Hydrolysis of terminal non-reducing N-acetyl-D-hexosamine residues in N-acetyl-beta-D-hexosaminides.. Its activity is regulated as follows. Significantly inhibited by the addition of sodium dodecyl sulfate (SDS), but not by EDTA, urea, 2-mercaptoethanol or Triton X-100. Strongly inhibited by Cu2(+) ions, in case of which the activity is decreased by 70%. No significant inhibition with Al(3+), Fe(3+), Ca(2+), Cd(2+), Mg(2+), Mn(2+), Ni(2+) and Zn(2+) ions. Strongly inhibited by PugNAc (O-(2-acetamido-2-deoxy-D-glucopyranosylideneamino) N-phenylcarbamate) in the sub-micromolar concentration range. PugNAc at a concentration of 0.5 mM decreases the activity by 50% and the addition of 1 mM PugNAc fully inhibits the enzyme. No significant reduction in the activity by alkylation using N-ethylmaleimide or 2-iodoacetamide. In terms of biological role, hydrolyzes terminal GlcNAc residues from terminally unbranched N-glycans and from chitobiose. Hydrolyzes beta-1,6-linked N-acetylglucosamine and beta-1,4-linked N-acetylgalactosamine from pNP-alpha-GalNAc[beta1,3Gal]beta1,6GlcNAc and pNP-beta-GlcNAc-beta1,4-GalNAc substrates, respectively, as well as beta-1,2-linked N-acetylglucosamine units from the non-reducing end of N-glycans. Hydrolyzes GlcNAc residues linked to alpha1,3- or alpha1,6-mannose branch, but has low activity on substrates with more than one GlcNAc residue on one of the mannose branches. Releases terminal GlcNAc moieties from the N-glycopeptide Gly-Glu-Asn-(GlcNAc2Man3GlcNAc2)-Arg with high efficiency. Has moderate hydrolytic activity on the chitobiose moiety of N-glycopeptide substrate Gly-Glu-Asn-(GlcNAc2)-Arg. Does not hydrolyze GlcNAc residues from N-glycan structures bearing a bisecting GlcNAc moiety (beta1,4-linked GlcNAc to the beta1,4-linked core mannose). Potentially capable of cleaving the specific glycoside linkages in the process of mucin degradation in human intestinal tract. Hydrolyzes synthetic substrate pNP-beta-GlcNAc with high activity and pNP-beta-GalNAc to a lesser extent. Does not hydrolyze pNP-beta-glucose, pNP-beta-galactose, pNP-alpha-glucose, pNP-alpha-galactose, pNP-alpha-GlcNAc or pNP-alpha-fucose. This Akkermansia muciniphila (strain ATCC BAA-835 / DSM 22959 / JCM 33894 / BCRC 81048 / CCUG 64013 / CIP 107961 / Muc) protein is Beta-hexosaminidase Amuc_2018.